A 189-amino-acid polypeptide reads, in one-letter code: Mitochondrial FAD-linked sulfhydryl oxidase ERV1 (189 aa).

Residues aspartate 83 to tryptophan 183 enclose the ERV/ALR sulfhydryl oxidase domain. FAD is bound by residues glutamate 88–tryptophan 95, histidine 99, and tyrosine 128. 2 disulfides stabilise this stretch: cysteine 130/cysteine 133 and cysteine 159/cysteine 176. FAD is bound by residues cysteine 159–lysine 171 and arginine 182–tryptophan 183.

As to quaternary structure, homodimer. Interacts with MIA40, forming transient intermolecular disulfide bridges. Requires FAD as cofactor.

It localises to the mitochondrion intermembrane space. It catalyses the reaction 2 R'C(R)SH + O2 = R'C(R)S-S(R)CR' + H2O2. In terms of biological role, FAD-dependent sulfhydryl oxidase that catalyzes disulfide bond formation. Required for the import and folding of small cysteine-containing proteins in the mitochondrial intermembrane space (IMS). Forms a redox cycle with MIA40 that involves a disulfide relay system. Important for maintaining the cysteine residues in MIA40 in an oxidized state. Reduced ERV1 is reoxidized by cytochrome c. Required for the maturation of cytoplasmic, but not of mitochondrial Fe/S proteins. This Saccharomyces cerevisiae (strain ATCC 204508 / S288c) (Baker's yeast) protein is Mitochondrial FAD-linked sulfhydryl oxidase ERV1 (ERV1).